Reading from the N-terminus, the 785-residue chain is Endonuclease MutS2 (785 aa).

335–342 is a binding site for ATP; that stretch reads GPNTGGKT. The Smr domain occupies 710–785; that stretch reads LDLRGERYED…GNGVTIVEFK (76 aa).

Belongs to the DNA mismatch repair MutS family. MutS2 subfamily. In terms of assembly, homodimer. Binds to stalled ribosomes, contacting rRNA.

Functionally, endonuclease that is involved in the suppression of homologous recombination and thus may have a key role in the control of bacterial genetic diversity. Its function is as follows. Acts as a ribosome collision sensor, splitting the ribosome into its 2 subunits. Detects stalled/collided 70S ribosomes which it binds and splits by an ATP-hydrolysis driven conformational change. Acts upstream of the ribosome quality control system (RQC), a ribosome-associated complex that mediates the extraction of incompletely synthesized nascent chains from stalled ribosomes and their subsequent degradation. Probably generates substrates for RQC. This chain is Endonuclease MutS2, found in Listeria monocytogenes serotype 4b (strain CLIP80459).